The primary structure comprises 229 residues: APDDDDKIVGGYECPKHAAPWTVSLNVGYHFCGGSLIAPGWVVSAAHCYQRRIQVRLGEHDISANEGDETYIDSSMVIRHPNYSGYDLDNDIMLIKLSKPAALNRNVDLISLPTGCAYAGEMCLISGWGNTMDGAVSGDQLQCLDAPVLSDAECKGAYPGMITNNMMCVGYMEGGKDSCQGDSGGPVVCNGMLQGIVSWGYGCAERDHPGVYTRVCHYVSWIHETIASV.

The propeptide at 1 to 7 is activation peptide; it reads APDDDDK. Residues 8-227 enclose the Peptidase S1 domain; that stretch reads IVGGYECPKH…YVSWIHETIA (220 aa). 6 cysteine pairs are disulfide-bonded: Cys14–Cys143, Cys32–Cys48, Cys116–Cys216, Cys123–Cys189, Cys154–Cys168, and Cys179–Cys203. Catalysis depends on His47, which acts as the Charge relay system. Positions 59 and 69 each coordinate Ca(2+). Asp91 acts as the Charge relay system in catalysis. The active-site Charge relay system is the Ser183.

Belongs to the peptidase S1 family. The cofactor is Ca(2+).

The protein resides in the secreted. Its subcellular location is the extracellular space. It carries out the reaction Preferential cleavage: Arg-|-Xaa, Lys-|-Xaa.. This chain is Trypsin, found in Squalus acanthias (Spiny dogfish).